A 506-amino-acid polypeptide reads, in one-letter code: Acyl-CoA-binding domain-containing protein 5 (506 aa).

The ACB domain maps to 44–133 (YETRFEAAVK…MKKIIETMPM (90 aa)). Residues 55-64 (IQSLPKNGSF), 75-79 (YSFYK), Lys-101, and Tyr-120 each bind an acyl-CoA. The segment at 175–217 (AKAVNGKAESSDSGAESEEEEAQEELKGAEQSGSDDKKMMTKS) is disordered. Residues 181 to 209 (KAESSDSGAESEEEEAQEELKGAEQSGSD) adopt a coiled-coil conformation. Phosphoserine is present on residues Ser-184, Ser-185, Ser-187, Ser-191, Ser-206, and Ser-233. Residues 198-217 (EELKGAEQSGSDDKKMMTKS) show a composition bias toward basic and acidic residues. Disordered regions lie at residues 234-302 (FAQD…CDSM) and 345-417 (AVKG…RGSR). The span at 238 to 257 (SDIHTDSSRSARRSEDKKPT) shows a compositional bias: basic and acidic residues. Positions 258–267 (DQSSQQTGNT) are enriched in polar residues. Ser-301 is subject to Phosphoserine. The span at 348–360 (GKGEVKHGGEDGR) shows a compositional bias: basic and acidic residues. Ser-403 bears the Phosphoserine mark. Positions 406–416 (DGERWGSDRGS) are enriched in basic and acidic residues. Residues 426–451 (LVLIRLQEDMQNVLQRLHKLETLTAS) are a coiled coil. The residue at position 444 (Lys-444) is an N6-acetyllysine. The helical transmembrane segment at 478-498 (GALAFAIIWPFIAQWLVHLYY) threads the bilayer.

It belongs to the ATG37 family.

Its subcellular location is the peroxisome membrane. Its function is as follows. Acyl-CoA binding protein which acts as the peroxisome receptor for pexophagy but is dispensable for aggrephagy and nonselective autophagy. Binds medium- and long-chain acyl-CoA esters. In Rattus norvegicus (Rat), this protein is Acyl-CoA-binding domain-containing protein 5 (Acbd5).